We begin with the raw amino-acid sequence, 440 residues long: Chromosome partition protein MukF (440 aa).

The tract at residues 208-236 is leucine-zipper; the sequence is LSETSGTLRELQDTLEAAGDKLQANLLRI.

The protein belongs to the MukF family. Interacts, and probably forms a ternary complex, with MukE and MukB via its C-terminal region. The complex formation is stimulated by calcium or magnesium. It is required for an interaction between MukE and MukB.

It localises to the cytoplasm. The protein resides in the nucleoid. Involved in chromosome condensation, segregation and cell cycle progression. May participate in facilitating chromosome segregation by condensation DNA from both sides of a centrally located replisome during cell division. Not required for mini-F plasmid partitioning. Probably acts via its interaction with MukB and MukE. Overexpression results in anucleate cells. It has a calcium binding activity. The sequence is that of Chromosome partition protein MukF from Yersinia pestis.